Consider the following 249-residue polypeptide: ATP synthase subunit a (249 aa).

A run of 6 helical transmembrane segments spans residues 30–50 (SLYM…GSAG), 84–104 (FFPL…IGVI), 114–134 (LIVT…YGLY), 143–163 (VFVP…IEVI), 193–213 (FVTS…LPLA), and 220–240 (ILEV…TCIY).

The protein belongs to the ATPase A chain family. As to quaternary structure, F-type ATPases have 2 components, CF(1) - the catalytic core - and CF(0) - the membrane proton channel. CF(1) has five subunits: alpha(3), beta(3), gamma(1), delta(1), epsilon(1). CF(0) has three main subunits: a(1), b(2) and c(9-12). The alpha and beta chains form an alternating ring which encloses part of the gamma chain. CF(1) is attached to CF(0) by a central stalk formed by the gamma and epsilon chains, while a peripheral stalk is formed by the delta and b chains.

The protein resides in the cell inner membrane. Key component of the proton channel; it plays a direct role in the translocation of protons across the membrane. This chain is ATP synthase subunit a, found in Afipia carboxidovorans (strain ATCC 49405 / DSM 1227 / KCTC 32145 / OM5) (Oligotropha carboxidovorans).